The chain runs to 64 residues: Small, acid-soluble spore protein H (64 aa).

It belongs to the SspH family.

The protein localises to the spore core. This is Small, acid-soluble spore protein H from Acetivibrio thermocellus (strain ATCC 27405 / DSM 1237 / JCM 9322 / NBRC 103400 / NCIMB 10682 / NRRL B-4536 / VPI 7372) (Clostridium thermocellum).